The primary structure comprises 502 residues: Histidine--tRNA ligase (502 aa).

This sequence belongs to the class-II aminoacyl-tRNA synthetase family. In terms of assembly, homodimer.

The protein localises to the cytoplasm. The catalysed reaction is tRNA(His) + L-histidine + ATP = L-histidyl-tRNA(His) + AMP + diphosphate + H(+). The polypeptide is Histidine--tRNA ligase (Brucella abortus (strain S19)).